The chain runs to 423 residues: CinA-like protein (423 aa).

This sequence belongs to the CinA family.

The chain is CinA-like protein from Chlorobium phaeobacteroides (strain DSM 266 / SMG 266 / 2430).